Here is a 186-residue protein sequence, read N- to C-terminus: Adenylate kinase isoenzyme 6 homolog (186 aa).

Positions 15, 17, 18, 19, and 20 each coordinate ATP. The NMPbind stretch occupies residues 48-71; that stretch reads NLSNIIKDERLYKEFDDELDASIY. Residues 126–136 are LID; that stretch reads KRNYTKEKIKN. Arg127 lines the ATP pocket.

The protein belongs to the adenylate kinase family. AK6 subfamily. In terms of assembly, monomer and homodimer. Interacts with small ribosomal subunit protein uS11. Not a structural component of 43S pre-ribosomes, but transiently interacts with them by binding to uS11.

It is found in the cytoplasm. It localises to the nucleus. It catalyses the reaction AMP + ATP = 2 ADP. It carries out the reaction ATP + H2O = ADP + phosphate + H(+). Broad-specificity nucleoside monophosphate (NMP) kinase that catalyzes the reversible transfer of the terminal phosphate group between nucleoside triphosphates and monophosphates. Also has ATPase activity. Involved in the late cytoplasmic maturation steps of the 40S ribosomal particles, specifically 18S rRNA maturation. While NMP activity is not required for ribosome maturation, ATPase activity is. Associates transiently with small ribosomal subunit protein uS11. ATP hydrolysis breaks the interaction with uS11. May temporarily remove uS11 from the ribosome to enable a conformational change of the ribosomal RNA that is needed for the final maturation step of the small ribosomal subunit. Its NMP activity may have a role in nuclear energy homeostasis. This Plasmodium falciparum (isolate 3D7) protein is Adenylate kinase isoenzyme 6 homolog.